A 342-amino-acid polypeptide reads, in one-letter code: Succinylglutamate desuccinylase (342 aa).

The Zn(2+) site is built by H62, E65, and H158. Residue E222 is part of the active site.

It belongs to the AspA/AstE family. Succinylglutamate desuccinylase subfamily. Requires Zn(2+) as cofactor.

It catalyses the reaction N-succinyl-L-glutamate + H2O = L-glutamate + succinate. It participates in amino-acid degradation; L-arginine degradation via AST pathway; L-glutamate and succinate from L-arginine: step 5/5. Its function is as follows. Transforms N(2)-succinylglutamate into succinate and glutamate. This is Succinylglutamate desuccinylase from Shewanella frigidimarina (strain NCIMB 400).